The chain runs to 101 residues: Large ribosomal subunit protein uL23 (101 aa).

The protein belongs to the universal ribosomal protein uL23 family. Part of the 50S ribosomal subunit. Contacts protein L29, and trigger factor when it is bound to the ribosome.

One of the early assembly proteins it binds 23S rRNA. One of the proteins that surrounds the polypeptide exit tunnel on the outside of the ribosome. Forms the main docking site for trigger factor binding to the ribosome. The polypeptide is Large ribosomal subunit protein uL23 (Mannheimia succiniciproducens (strain KCTC 0769BP / MBEL55E)).